Consider the following 128-residue polypeptide: Small ribosomal subunit protein uS12 (128 aa).

Residues 1-29 (MPTINQLIRKGREPKERKSKSPALMGNPQ) are disordered. 3-methylthioaspartic acid is present on D89. Positions 106 to 128 (GVEGRRQGRSKYGAKRPKEGGKK) are disordered.

It belongs to the universal ribosomal protein uS12 family. In terms of assembly, part of the 30S ribosomal subunit. Contacts proteins S8 and S17. May interact with IF1 in the 30S initiation complex.

Its function is as follows. With S4 and S5 plays an important role in translational accuracy. Functionally, interacts with and stabilizes bases of the 16S rRNA that are involved in tRNA selection in the A site and with the mRNA backbone. Located at the interface of the 30S and 50S subunits, it traverses the body of the 30S subunit contacting proteins on the other side and probably holding the rRNA structure together. The combined cluster of proteins S8, S12 and S17 appears to hold together the shoulder and platform of the 30S subunit. The chain is Small ribosomal subunit protein uS12 from Dictyoglomus turgidum (strain DSM 6724 / Z-1310).